Reading from the N-terminus, the 82-residue chain is Fibroblast growth factor 8 (82 aa).

A glycan (N-linked (GlcNAc...) asparagine) is linked at Asn-68.

The protein belongs to the heparin-binding growth factors family. Monomer. Homodimer. Interacts with FGFR1, FGFR2, FGFR3 and FGFR4. Affinity between fibroblast growth factors (FGFs) and their receptors is increased by heparan sulfate glycosaminoglycans that function as coreceptors.

It is found in the secreted. In terms of biological role, plays an important role in the regulation of embryonic development, cell proliferation, cell differentiation and cell migration. Required for normal brain, eye, ear and limb development during embryogenesis. Required for normal development of the gonadotropin-releasing hormone (GnRH) neuronal system. Plays a role in neurite outgrowth in hippocampal cells. In Canis lupus familiaris (Dog), this protein is Fibroblast growth factor 8 (FGF8).